The sequence spans 452 residues: Protein FAM81B (452 aa).

Polar residues-rich tracts occupy residues 1 to 11 (MQLQFLGTLAS) and 38 to 55 (IMSS…TATA). The interval 1-85 (MQLQFLGTLA…KVRLSPAKMS (85 aa)) is disordered. 2 coiled-coil regions span residues 164–192 (IQTI…DQAA) and 329–452 (LGHI…LQEV).

This sequence belongs to the FAM81 family.

This Homo sapiens (Human) protein is Protein FAM81B (FAM81B).